The chain runs to 422 residues: Probable protein phosphatase 2C 69 (422 aa).

The PPM-type phosphatase domain occupies 45-294 (TLLLAEAGER…DDTTCIVVDI (250 aa)). Residues Asp-70, Gly-71, Asp-246, and Asp-285 each contribute to the Mn(2+) site.

It belongs to the PP2C family. Requires Mg(2+) as cofactor. Mn(2+) serves as cofactor.

The enzyme catalyses O-phospho-L-seryl-[protein] + H2O = L-seryl-[protein] + phosphate. It catalyses the reaction O-phospho-L-threonyl-[protein] + H2O = L-threonyl-[protein] + phosphate. This is Probable protein phosphatase 2C 69 from Oryza sativa subsp. japonica (Rice).